A 417-amino-acid polypeptide reads, in one-letter code: 2-oxoglutarate and iron-dependent oxygenase JMJD4 (417 aa).

One can recognise a JmjC domain in the interval 142–301 (CRDFPVEDVF…NMWRFLQQEL (160 aa)). Positions 189, 191, and 269 each coordinate Fe cation.

Belongs to the JMJD6 family. As to quaternary structure, interacts with ETF1. Interacts with the ETF1-GSPT1 complex. Requires Fe(2+) as cofactor.

Its subcellular location is the cytoplasm. It catalyses the reaction L-lysyl-[protein] + 2-oxoglutarate + O2 = 4-hydroxy-L-lysyl-[protein] + succinate + CO2. Functionally, catalyzes the 2-oxoglutarate and iron-dependent C4-lysyl hydroxylation of ETF1 at 'Lys-63' thereby promoting the translational termination efficiency of ETF1. The chain is 2-oxoglutarate and iron-dependent oxygenase JMJD4 (JMJD4) from Homo sapiens (Human).